Here is a 92-residue protein sequence, read N- to C-terminus: UPF0223 protein SUB0967 (92 aa).

This sequence belongs to the UPF0223 family.

This is UPF0223 protein SUB0967 from Streptococcus uberis (strain ATCC BAA-854 / 0140J).